A 458-amino-acid polypeptide reads, in one-letter code: tRNA-2-methylthio-N(6)-dimethylallyladenosine synthase (458 aa).

The region spanning 15–134 (KKVFIKTYGC…LPELLQQAQQ (120 aa)) is the MTTase N-terminal domain. Residues Cys-24, Cys-60, Cys-97, Cys-175, Cys-179, and Cys-182 each contribute to the [4Fe-4S] cluster site. The Radical SAM core domain occupies 161-393 (QKRGVSAFLT…QALLLDQQHR (233 aa)). One can recognise a TRAM domain in the interval 396 to 457 (RSKIGQTTDV…SNSFVGEKAN (62 aa)).

This sequence belongs to the methylthiotransferase family. MiaB subfamily. As to quaternary structure, monomer. It depends on [4Fe-4S] cluster as a cofactor.

The protein resides in the cytoplasm. It catalyses the reaction N(6)-dimethylallyladenosine(37) in tRNA + (sulfur carrier)-SH + AH2 + 2 S-adenosyl-L-methionine = 2-methylsulfanyl-N(6)-dimethylallyladenosine(37) in tRNA + (sulfur carrier)-H + 5'-deoxyadenosine + L-methionine + A + S-adenosyl-L-homocysteine + 2 H(+). Its function is as follows. Catalyzes the methylthiolation of N6-(dimethylallyl)adenosine (i(6)A), leading to the formation of 2-methylthio-N6-(dimethylallyl)adenosine (ms(2)i(6)A) at position 37 in tRNAs that read codons beginning with uridine. This Bartonella bacilliformis (strain ATCC 35685 / KC583 / Herrer 020/F12,63) protein is tRNA-2-methylthio-N(6)-dimethylallyladenosine synthase.